The sequence spans 422 residues: Dihydroorotase (422 aa).

Zn(2+) contacts are provided by His59 and His61. Residues 61–63 (HFR) and Asn93 contribute to the substrate site. The Zn(2+) site is built by Asp150, His177, and His230. Substrate is bound at residue Asn276. Asp303 serves as a coordination point for Zn(2+). Asp303 is an active-site residue. Substrate is bound at residue His307.

The protein belongs to the metallo-dependent hydrolases superfamily. DHOase family. Class I DHOase subfamily. Requires Zn(2+) as cofactor.

It catalyses the reaction (S)-dihydroorotate + H2O = N-carbamoyl-L-aspartate + H(+). It functions in the pathway pyrimidine metabolism; UMP biosynthesis via de novo pathway; (S)-dihydroorotate from bicarbonate: step 3/3. Functionally, catalyzes the reversible cyclization of carbamoyl aspartate to dihydroorotate. This is Dihydroorotase from Streptococcus thermophilus (strain CNRZ 1066).